Here is a 368-residue protein sequence, read N- to C-terminus: Probable staphylococcal-like nuclease CAN2 (368 aa).

A lipid anchor (N-myristoyl glycine) is attached at G2. The S-palmitoyl cysteine moiety is linked to residue C7. The disordered stretch occupies residues 16-56 (DHYPYYKPTSRPHYQPPHYHGQPAAPPAPLQQQHLGPHGVT). Low complexity predominate over residues 27 to 38 (PHYQPPHYHGQP). Residues 168–344 (NTLPVYDKCI…RAANRGLWAS (177 aa)) form the TNase-like domain. D181 is a binding site for Ca(2+). R251 is a catalytic residue. D256 serves as a coordination point for Ca(2+). Active-site residues include E259 and R293.

It belongs to the thermonuclease family. Ca(2+) is required as a cofactor.

It localises to the cell membrane. Enzyme that catalyzes the hydrolysis of both DNA and RNA at the 5' position of the phosphodiester bond. This is Probable staphylococcal-like nuclease CAN2 from Oryza sativa subsp. japonica (Rice).